A 411-amino-acid chain; its full sequence is MTGQTAPAAPEDANVLGLPETKVRKFNINFGPQHPAAHGVLRLVLELDGEVVERVDPHIGLLHRGTEKLMEARPYAQTIPYFDRLDYVAPMNQEHAYCLAIEKLLGVEVPVRGLLIRTLYDEIGRILNHLLNVTTQAMDVGALTPPLWGFEEREKLMIFYERASGARLHANYYRVGGVRQDLPPELVQDISDWCDAFPKILDDIEGLITDNRIFKQRNVDIGVVTKEEAIAWGFSGVMVRGSGIPWDLRRSQPYALYSEMEFDIPLGVNGDCYDRYLCRMQEMRESTKIMKQCCERLLKTSGPVLVDDHKVSPPRRGEMKRSMEALIHHFKLYTEGYRTPPGDVYACVEAPKGEFGVYLVSNGTNKPYRCKIRAPGYPHLQAMDWMNRGHMLADVSAILGSLDIVFGEIDR.

Belongs to the complex I 49 kDa subunit family. As to quaternary structure, NDH-1 is composed of 14 different subunits. Subunits NuoB, C, D, E, F, and G constitute the peripheral sector of the complex.

The protein resides in the cell inner membrane. It carries out the reaction a quinone + NADH + 5 H(+)(in) = a quinol + NAD(+) + 4 H(+)(out). NDH-1 shuttles electrons from NADH, via FMN and iron-sulfur (Fe-S) centers, to quinones in the respiratory chain. The immediate electron acceptor for the enzyme in this species is believed to be ubiquinone. Couples the redox reaction to proton translocation (for every two electrons transferred, four hydrogen ions are translocated across the cytoplasmic membrane), and thus conserves the redox energy in a proton gradient. The chain is NADH-quinone oxidoreductase subunit D from Phenylobacterium zucineum (strain HLK1).